The primary structure comprises 2594 residues: MFWREDAAQQQQQQQQQQQQQQQQQQPPHPPKRLSFSFNVKIAVNVNTKMSTTHINQERSKQQTTTGSRSRSRSNSNSSVSCKGDGDRRVRRHTTRLVGLRQQLLHLGRQLNPGQFLVTGHGGISTILIANLLLLLLLSLCCNVCCRSHIEPDQNLTPTTTSPAAVAVVPMLLPLAQTHMRPQLDSDVVEKVAVWTKHVGAAPPSIAEGIAISSVVRMPPSIQTPTETVRRQEQQRQQQQQQQEAAAAAAADAAIDERIVLERVTRDCVQRCIVEEDLFLDEFGIKCEKADNSDKCYKTRCNKGCAQWYRALKEIEPCQEACASTQFYPYDMPCIGACETAQRDYWHMQRLAMARLVETTQPQLLEMTDESSTLTIKWAMQFPENYLASRPFNIQYQQVDNQSEPEWHNLADYDCDEYYVCEILEALVPYTRYKFRFELPFGESSEDVLYSPATPVYETPMEGAPISAPIIVALLALDEHHVFVHWRPGRYSNAPIEGYRVLLTSAGNTSREQLLPAQRTSCIFAQLQPLTNYTVALTMINKQGEGPSTVVSIVTKSPLEPQQLQSVLLASEHSIIWQSLEPAGETRLLYTSEPAAISDFTFSQREQRLWLLDELGQLHSQLLDETTTSAARRLRLELPSNGSSQWTPRKLSLDWLQRRLYIAAQANSSDGAEGGFELFSSNLEGGDVQMAGVQLGLVVEQLELDALNGWLFWCDADSLWRLDLSSKQQLRLTQPAGAPGRFMLEPQRWLLHVLLPQENQLLELSYDGGHKHALALSNDSWRGFAWSSDQAQLLLANETQLQLLDGQTLVPLANWSPDGGCCALLPLERRRQPLSLEPPAPRELRALLGAQGAHITWQPPAANPYQTATAAARNFSYELEVLDVASQSAYNIRNIRVPHFGLERLQADNLYQLRVRANNAAGRAGVWTAPLATRTWPLGDHRLRWATQRGSLYTTNELGGQLQPLPVQLASSPGPLALVNASVAYYVSGREQSLHCVNLLQPQLSCTDERLEHVGAVAYDWRGGLLYWTDLARDCVQRLDPFSGERELLPIFGARHLALDSAQGHLYYSSSAHLARRSLSALSTHQPELEYYHVNGLAGQISGFCLDLPQRHIYWLVAGNSALHLYRTALSAGGSQAAVPLQLLTTLPAADALPHTLQHLAPLGALLWLAADGRGAHLLRLAAQLETDTDTMRLLPEGLVEPLSAVQLLERSAGPPPPPPDEGVRPLAVPPDSVHIDEGGHWNDFRVRWQPAASGGNHSVCYKLLLEHGSERLITLELLTPFARITQLAQAPLGLRISITPHTAWRAGSTTRVQLDTPVAAPTQPRRLRVFVERQAAPLQLAPNVSALLRWDVPEEHAGSQSLQYRISCWRGSELHSELLLNQSTLEARVEHLQPEETYRFQVQAHVAATGLAAGATSHALHVSPEVQSVPRLLYANAEHIGELDLDTGHRKQLVHTASPVEHLVVLQGEQRLLWVNEHVELLSHVPGKAPAKLARMRAEVLALTVDWVQRIVYWAELDAADGGCVIYSLDLCRFDGRILQGERLWSTPRGQLLRDLVALPHARQLVWLQHDLDSRNATLQGRSLANGSALTFEGVTLPLWRLFEGSQEPLAETLNLVDHLGRLCVYHVARQLCTSSALRAQLNLLNDDIGQLAQDPGYLYALRNGSVRAYGRRRQQLEFLLELQPDEVRLLRAYNYQAYPSRRCLLLPTTAAALESTPSSCEETQCSLQLPALSAAPDCPLPVPGLNYQLNLSSSSRSAQLELRSLHSAAGLTLNISQLQPYQAYELRAQVGSYYQQQLGQEPLQLPVLTLHTAAATPSAPRNFSGRALSPSELELSWLAPLELRSASVYYTLHWQLQLEDTEEQSQEQPAQEQRVETAGVQRLTGLQPARLYQVWLQAHATPSKYNSSGRLLIRSYAPLPPLQLIELNAYGMTLAWPGTPDALSSLTLECQSLREQLQFNVAGNHTQMRLAPLQPKTRYSCRLALAYAATPGAPIYFGPSHEYETLGDAPSAPGRPQLEHIAGEIFRVSWTPALDNGSPILLYNLEALQARRTNRRRRRRRETTLSLLPWAEEPLVIEDQWLDFCNTTELSCIVRELHTRRLLLFRVRARNRPHGWGPYSEDSERIAEPFVSPEKRGSLVLAIIAPAAIVSSCVLALVLVRKLQKRRHRAKKLLQQSRPSIWSNLSALQTQQQLLAARSRTFSMSLSDADIALLPQINWNRLTLLRFLGSGAFGEVYEGQLQAEDEAQPQRVAIKSLRKGASEFAELLQEAQLMSNFKHENIVCLIGICCDTDSISLIMEHMEAGDLLSYLRAARPSSQEALSKLQLPELLSMCLDVANGCSYMEDMHFVHRDLACRNCLVSDGAAIGGRRIVKIGDFGLARDIYKSDYYRKEGEGLLPVRWMALESLVDGLFSTQSDVWAFGVLCWEIFTLGQQPYAARNNFEVLAHVKEGGRLQQPERCPEKLYALLLQCWRSEPWERPSFKRCLSTLQALSSDLRRTEMLATDETPLVSALCAFKPDAKVRFDDAPQRLTLHLDAKDTVSTTDADTTGSPTTPTAPTTPTTTTSTIAVVSTAPSSENGQLYANEGISGL.

Disordered regions lie at residues 1 to 34 (MFWREDAAQQQQQQQQQQQQQQQQQQPPHPPKRL) and 49 to 92 (KMST…RVRR). At 1–2141 (MFWREDAAQQ…FVSPEKRGSL (2141 aa)) the chain is on the extracellular side. Residues 9-26 (QQQQQQQQQQQQQQQQQQ) are compositionally biased toward low complexity. N-linked (GlcNAc...) asparagine glycans are attached at residues N77, N401, N508, N532, N641, N667, N778, N797, N874, and N980. Fibronectin type-III domains lie at 358–462 (ETTQ…TPME) and 468–560 (APII…SPLE). The region spanning 838–938 (PPAPRELRAL…APLATRTWPL (101 aa)) is the Fibronectin type-III 3 domain. One copy of the LDL-receptor class B repeat lies at 1024–1066 (GLLYWTDLARDCVQRLDPFSGERELLPIFGARHLALDSAQGHL). 2 Fibronectin type-III domains span residues 1227-1317 (LAVP…QLDT) and 1324-1430 (QPRR…VQSV). 12 N-linked (GlcNAc...) asparagine glycosylation sites follow: N1257, N1344, N1382, N1577, N1587, N1665, N1752, N1776, N1824, N1908, N1966, and N2088. Fibronectin type-III domains follow at residues 1711 to 1814 (TAAA…TLHT), 1821 to 1920 (APRN…SYAP), 1922 to 2010 (PPLQ…TLGD), and 2014 to 2132 (APGR…AEPF). Residues 2142–2162 (VLAIIAPAAIVSSCVLALVLV) form a helical membrane-spanning segment. The Cytoplasmic segment spans residues 2163–2594 (RKLQKRRHRA…LYANEGISGL (432 aa)). The Protein kinase domain maps to 2224–2495 (LTLLRFLGSG…KRCLSTLQAL (272 aa)). Residues 2230–2238 (LGSGAFGEV) and K2257 contribute to the ATP site. Catalysis depends on D2355, which acts as the Proton acceptor. Y2391 carries the phosphotyrosine; by autocatalysis modification. The tract at residues 2543–2568 (TVSTTDADTTGSPTTPTAPTTPTTTT) is disordered. Residues 2545 to 2568 (STTDADTTGSPTTPTAPTTPTTTT) are compositionally biased toward low complexity.

It belongs to the protein kinase superfamily. Tyr protein kinase family. Insulin receptor subfamily.

Its subcellular location is the cell membrane. The catalysed reaction is L-tyrosyl-[protein] + ATP = O-phospho-L-tyrosyl-[protein] + ADP + H(+). Receptor for an extracellular signal required to instruct a cell to differentiate into a R7 photoreceptor. The ligand for Sev is the Boss (Bride of Sevenless) protein. This Drosophila virilis (Fruit fly) protein is Protein sevenless (sev).